A 385-amino-acid polypeptide reads, in one-letter code: 1-deoxy-D-xylulose 5-phosphate reductoisomerase 1 (385 aa).

NADPH-binding residues include Thr-11, Gly-12, Ser-13, Ile-14, Asn-39, and Asn-122. Lys-123 provides a ligand contact to 1-deoxy-D-xylulose 5-phosphate. Glu-124 is an NADPH binding site. Asp-148 provides a ligand contact to Mn(2+). Residues Ser-149, Glu-150, Ser-174, and His-197 each coordinate 1-deoxy-D-xylulose 5-phosphate. Position 150 (Glu-150) interacts with Mn(2+). Residue Gly-203 coordinates NADPH. The 1-deoxy-D-xylulose 5-phosphate site is built by Ser-210, Asn-215, Lys-216, and Glu-219. Residue Glu-219 participates in Mn(2+) binding.

Belongs to the DXR family. The cofactor is Mg(2+). Mn(2+) is required as a cofactor.

It carries out the reaction 2-C-methyl-D-erythritol 4-phosphate + NADP(+) = 1-deoxy-D-xylulose 5-phosphate + NADPH + H(+). Its pathway is isoprenoid biosynthesis; isopentenyl diphosphate biosynthesis via DXP pathway; isopentenyl diphosphate from 1-deoxy-D-xylulose 5-phosphate: step 1/6. Catalyzes the NADPH-dependent rearrangement and reduction of 1-deoxy-D-xylulose-5-phosphate (DXP) to 2-C-methyl-D-erythritol 4-phosphate (MEP). The protein is 1-deoxy-D-xylulose 5-phosphate reductoisomerase 1 of Bacillus anthracis.